Reading from the N-terminus, the 427-residue chain is Sperm-associated antigen 1A (427 aa).

Residues 46 to 113 form a disordered region; that stretch reads QKKGPGYREG…GPGSAGESCN (68 aa). TPR repeat units lie at residues 125-158, 167-200, 202-234, 302-335, 336-369, and 371-403; these read LARLKNQGNMLFKNGQFGDALEKYTQAIDGCIEA, CVLYSNRAACFLKDGNSADCIQDCTRALELHPFS, KPLLRRAMAYESLERYRKAYVDYKTVLQIDISV, FTILKQEGNELVKNSQFQGASEKYSECLAIKPNE, CAIYTNRALCFLKLERFAEAKQDCDSALQMEPKN, and KAFYRRALAHKGLKDYLSASTDLQEVLQLDPNV.

The protein localises to the cytoplasm. It is found in the dynein axonemal particle. Its function is as follows. May play a role in the cytoplasmic assembly and/or trafficking of the axonemal dynein arms. This is Sperm-associated antigen 1A (spag1a) from Danio rerio (Zebrafish).